The chain runs to 167 residues: Translation initiation factor IF-3 (167 aa).

It belongs to the IF-3 family. Monomer.

The protein localises to the cytoplasm. In terms of biological role, IF-3 binds to the 30S ribosomal subunit and shifts the equilibrium between 70S ribosomes and their 50S and 30S subunits in favor of the free subunits, thus enhancing the availability of 30S subunits on which protein synthesis initiation begins. The polypeptide is Translation initiation factor IF-3 (Shouchella clausii (strain KSM-K16) (Alkalihalobacillus clausii)).